The chain runs to 225 residues: Histone H1 (225 aa).

Positions 1-20 (MGPKATSGTRGRGKKVGTKT) are disordered. The H15 domain maps to 23-94 (PLPKYKDLIV…GPAGSIKLLK (72 aa)). The interval 95–147 (KAAQPKPEEAKRAAKPAKRVVKAAKPAKAKPAKAAKAAKPAKPVKAAKAASAV) is disordered. Positions 107 to 127 (AAKPAKRVVKAAKPAKAKPAK) are enriched in basic residues. Residues 128-147 (AAKAAKPAKPVKAAKAASAV) are compositionally biased toward low complexity.

This sequence belongs to the histone H1/H5 family.

Its subcellular location is the nucleus. The protein localises to the chromosome. Could act as an H1-type linker histone. In Eremothecium gossypii (strain ATCC 10895 / CBS 109.51 / FGSC 9923 / NRRL Y-1056) (Yeast), this protein is Histone H1 (HHOA).